A 293-amino-acid polypeptide reads, in one-letter code: Histamine N-methyltransferase B (293 aa).

Glutamate 28 is a substrate binding site. S-adenosyl-L-methionine-binding residues include glycine 60, glutamate 89, glutamine 94, serine 120, and isoleucine 142. Asparagine 283 contributes to the substrate binding site.

This sequence belongs to the class I-like SAM-binding methyltransferase superfamily. HNMT family. Monomer.

It is found in the cytoplasm. It catalyses the reaction histamine + S-adenosyl-L-methionine = N(tau)-methylhistamine + S-adenosyl-L-homocysteine + H(+). Functionally, inactivates histamine by N-methylation. Plays an important role in degrading histamine and in regulating the airway response to histamine. This is Histamine N-methyltransferase B (hnmt-b) from Xenopus laevis (African clawed frog).